The primary structure comprises 223 residues: RNA-free ribonuclease P (223 aa).

The protein belongs to the HARP family.

The enzyme catalyses Endonucleolytic cleavage of RNA, removing 5'-extranucleotides from tRNA precursor.. Functionally, RNA-free RNase P that catalyzes the removal of the 5'-leader sequence from pre-tRNA to produce the mature 5'-terminus. In Methanococcus maripaludis (strain C6 / ATCC BAA-1332), this protein is RNA-free ribonuclease P.